A 240-amino-acid chain; its full sequence is Protein unc-119 homolog A (240 aa).

Over residues 1–11 the composition is skewed to gly residues; that stretch reads MKVKKGGGGAG. Residues 1–59 form a required for midbody localization region; sequence MKVKKGGGGAGTATESAPGPSGQSVAPIPQPPAESESGSESEPDAGPGPRPGPLQRKQP. The segment at 1–61 is disordered; sequence MKVKKGGGGA…GPLQRKQPIG (61 aa). A phosphoserine; by CK2 mark is found at Ser37, Ser39, and Ser41. Positions 121–240 are required for centrosome localization; the sequence is LDPNAGRFVR…KADYSYSGTP (120 aa). Tyr131 provides a ligand contact to tetradecanoate.

This sequence belongs to the PDE6D/unc-119 family. In terms of assembly, interacts with CABP4; in the absence of calcium. Interacts with DNM1; leading to a decrease of DNM1 GTPase activity. May interact with GTP-bound ARL1. Interacts with ARL2 and ARL3 (GTP-bound forms); this promotes the release of myyristoylated cargo proteins. Found in a complex with ARL3, RP2 and UNC119; RP2 induces hydrolysis of GTP ARL3 in the complex, leading to the release of UNC119. Interacts with NPHP3 (when myristoylated). Interacts with CYS1 (when myristoylated). Interacts with MACIR; interaction only takes place when UNC119 is not liganded with myristoylated proteins. Interacts with LCK; this interaction plays a crucial role in activation of LCK. Interacts with FYN. Interacts with RAB11A; in a cell cycle-dependent manner. Interacts with LYN (via SH2 and SH3 domains); leading to LYN activation. Found in a complex with ABL1, ABL2, CRK and UNC119; leading to the inhibition of CRK phosphorylation by ABL kinases. Interacts with CD44; leading to Shigella invasion. Interacts with KLHL18 (via kelch repeats). Interacts with PPP3CA, PPP3CB and PPP3CC. Interacts with USP48; this interaction promotes UNC119 stability. Phosphorylation suppresses its interaction with KLHL18 and down-regulates its KLHL18-mediated degradation. Phosphorylated more under light conditions than dark conditions. Dephosphorylated by calcineurin. In terms of tissue distribution, abundantly expressed in retina, in photoreceptor synapses and inner segments. Expressed in a much lesser extent in several other tissues.

It localises to the cytoplasm. It is found in the cytoskeleton. The protein resides in the microtubule organizing center. Its subcellular location is the centrosome. The protein localises to the spindle pole. It localises to the spindle. In terms of biological role, involved in synaptic functions in photoreceptor cells, the signal transduction in immune cells as a Src family kinase activator, endosome recycling, the uptake of bacteria and endocytosis, protein trafficking in sensory neurons and as lipid-binding chaperone with specificity for a diverse subset of myristoylated proteins. Specifically binds the myristoyl moiety of a subset of N-terminally myristoylated proteins and is required for their localization. Binds myristoylated GNAT1 and is required for G-protein localization and trafficking in sensory neurons. Probably plays a role in trafficking proteins in photoreceptor cells. Plays important roles in mediating Src family kinase signals for the completion of cytokinesis via RAB11A. In Homo sapiens (Human), this protein is Protein unc-119 homolog A (UNC119).